The chain runs to 130 residues: Small ribosomal subunit protein uS8 (130 aa).

It belongs to the universal ribosomal protein uS8 family. As to quaternary structure, part of the 30S ribosomal subunit. Contacts proteins S5 and S12.

In terms of biological role, one of the primary rRNA binding proteins, it binds directly to 16S rRNA central domain where it helps coordinate assembly of the platform of the 30S subunit. In Erwinia tasmaniensis (strain DSM 17950 / CFBP 7177 / CIP 109463 / NCPPB 4357 / Et1/99), this protein is Small ribosomal subunit protein uS8.